Reading from the N-terminus, the 601-residue chain is Jacalin-related lectin 3 (601 aa).

Jacalin-type lectin domains lie at 13–155 (PASL…HTQP), 240–382 (AKTY…HVME), and 438–583 (PSGP…HMQH).

It belongs to the jacalin lectin family.

The chain is Jacalin-related lectin 3 (JAL3) from Arabidopsis thaliana (Mouse-ear cress).